The following is a 372-amino-acid chain: Forkhead box protein F1-B (372 aa).

The tract at residues 1 to 51 (MTAEIQQPPSQPPAQSSPMSAATDKHGGQPSAMESASCATKTKKTNAGIRR) is disordered. Residues 13–22 (PAQSSPMSAA) are compositionally biased toward low complexity. Residues 54–148 (KPPYSYIALI…EEGSFRRRPR (95 aa)) constitute a DNA-binding region (fork-head).

As to expression, at the late gastrula stage, expressed in the presumptive ventrolateral mesoderm. During neurulation and tailbud stages, expressed in the lateral plate mesoderm and in the neural crest-derived structures of the head and branchial arches. During tailbud stages, expressed in the pronephros and pronephros ducts and in cells that migrate from the dorsolateral plate to the ventral region of the embryo (with the notable exception of the heart). These cells may represent hematopoietic or endothelial progenitor cells.

The protein localises to the nucleus. In terms of biological role, probable transcription factor. Required for smooth muscle (visceral mesoderm) differentiation during gut development. Also required for normal proliferation of the lateral plate mesoderm. Acts as a downstream mediator of bmp4-signaling. This is Forkhead box protein F1-B (foxf1-b) from Xenopus laevis (African clawed frog).